We begin with the raw amino-acid sequence, 346 residues long: MAASGKLSTCRLPPLPTIREIIKLLRLQAAKQLSQNFLLDLRLTDKIVRKAGNLTNAYVYEVGPGPGGITRSILNADVAELLVVEKDTRFIPGLQMLSDAAPGKLRIVHGDVLTFKVEKAFSESLKRPWEDDPPNVHIIGNLPFSVSTPLIIKWLENISCRDGPFVYGRTQMTLTFQKEVAERLAANTGSKQRSRLSVMAQYLCNVRHIFTIPGQAFVPKPEVDVGVVHFTPLIQPKIEQPFKLVEKVVQNVFQFRRKYCHRGLRMLFPEAQRLESTGRLLELADIDPTLRPRQLSISHFKSLCDVYRKMCDEDPQLFAYNFREELKRRKSKNEEKEEDDAENYRL.

The transit peptide at 1–27 (MAASGKLSTCRLPPLPTIREIIKLLRL) directs the protein to the mitochondrion. S-adenosyl-L-methionine-binding residues include Leu38, Gly63, Glu85, Lys86, Asp111, Val112, and Asn141.

The protein belongs to the class I-like SAM-binding methyltransferase superfamily. rRNA adenine N(6)-methyltransferase family. KsgA subfamily. In terms of assembly, interacts with mitochondrial RNA polymerase POLRMT. Interacts with TFAM. Bound to the maturing mtSSU until the late stages of assembly. In terms of tissue distribution, ubiquitously expressed.

It localises to the mitochondrion. The catalysed reaction is adenosine(N)/adenosine(N+1) in rRNA + 4 S-adenosyl-L-methionine = N(6)-dimethyladenosine(N)/N(6)-dimethyladenosine(N+1) in rRNA + 4 S-adenosyl-L-homocysteine + 4 H(+). Its function is as follows. Mitochondrial methyltransferase which uses S-adenosyl methionine to dimethylate two highly conserved adjacent adenosine residues (A1583 and A1584) within the loop of helix 45 at the 3-prime end of 12S rRNA, thereby regulating the assembly or stability of the small subunit of the mitochondrial ribosome. Also required for basal transcription of mitochondrial DNA, probably via its interaction with POLRMT and TFAM. Stimulates transcription independently of the methyltransferase activity. This chain is Dimethyladenosine transferase 1, mitochondrial, found in Homo sapiens (Human).